The following is a 319-amino-acid chain: Phosphoribosylformylglycinamidine cyclo-ligase (319 aa).

The protein belongs to the AIR synthase family.

It localises to the cytoplasm. It carries out the reaction 2-formamido-N(1)-(5-O-phospho-beta-D-ribosyl)acetamidine + ATP = 5-amino-1-(5-phospho-beta-D-ribosyl)imidazole + ADP + phosphate + H(+). Its pathway is purine metabolism; IMP biosynthesis via de novo pathway; 5-amino-1-(5-phospho-D-ribosyl)imidazole from N(2)-formyl-N(1)-(5-phospho-D-ribosyl)glycinamide: step 2/2. In Sulfurisphaera tokodaii (strain DSM 16993 / JCM 10545 / NBRC 100140 / 7) (Sulfolobus tokodaii), this protein is Phosphoribosylformylglycinamidine cyclo-ligase.